The primary structure comprises 128 residues: 3-aminoacrylate deaminase RutC (128 aa).

Belongs to the RutC family. Homotrimer.

It catalyses the reaction (Z)-3-aminoacrylate + H2O + H(+) = 3-oxopropanoate + NH4(+). Its function is as follows. Involved in pyrimidine catabolism. Catalyzes the deamination of 3-aminoacrylate to malonic semialdehyde, a reaction that can also occur spontaneously. RutC may facilitate the reaction and modulate the metabolic fitness, rather than catalyzing essential functions. The polypeptide is 3-aminoacrylate deaminase RutC (Escherichia coli O103:H2 (strain 12009 / EHEC)).